Reading from the N-terminus, the 81-residue chain is UPF0410 protein YwzA (81 aa).

3 helical membrane-spanning segments follow: residues 1–21 (MSFLISLIVAIIIGWLGSLFV), 27–47 (GGIIGSMIAGLIGAWIGHGLL), and 56–76 (GFAIIPAVIGAAIVVFLVSLL).

It belongs to the UPF0410 family.

It localises to the cell membrane. The sequence is that of UPF0410 protein YwzA (ywzA) from Bacillus subtilis (strain 168).